A 174-amino-acid polypeptide reads, in one-letter code: uncharacterized protein (174 aa).

A disordered region spans residues 138-174 (VNLTSKSSGRSDEEGTTRRAPVLKTRADFVSRKDKHR). The segment covering 162–174 (TRADFVSRKDKHR) has biased composition (basic and acidic residues).

This is an uncharacterized protein from Bos taurus (Bovine).